We begin with the raw amino-acid sequence, 505 residues long: Cytochrome P450 9b1 (505 aa).

Cys-449 serves as a coordination point for heme.

This sequence belongs to the cytochrome P450 family. Heme is required as a cofactor.

The protein localises to the endoplasmic reticulum membrane. The protein resides in the microsome membrane. Functionally, may be involved in the metabolism of insect hormones and in the breakdown of synthetic insecticides. In Drosophila melanogaster (Fruit fly), this protein is Cytochrome P450 9b1 (Cyp9b1).